The primary structure comprises 474 residues: Bifunctional protein HldE (474 aa).

The tract at residues 1-318 is ribokinase; it reads MKLSMPRFDQ…RAVQREQGSE (318 aa). 194 to 197 lines the ATP pocket; it reads NLSE. Asp263 is a catalytic residue. Residues 343 to 474 form a cytidylyltransferase region; the sequence is FTNGCFDILH…AIVEKIRQKG (132 aa).

In the N-terminal section; belongs to the carbohydrate kinase PfkB family. This sequence in the C-terminal section; belongs to the cytidylyltransferase family. In terms of assembly, homodimer.

It catalyses the reaction D-glycero-beta-D-manno-heptose 7-phosphate + ATP = D-glycero-beta-D-manno-heptose 1,7-bisphosphate + ADP + H(+). It carries out the reaction D-glycero-beta-D-manno-heptose 1-phosphate + ATP + H(+) = ADP-D-glycero-beta-D-manno-heptose + diphosphate. It functions in the pathway nucleotide-sugar biosynthesis; ADP-L-glycero-beta-D-manno-heptose biosynthesis; ADP-L-glycero-beta-D-manno-heptose from D-glycero-beta-D-manno-heptose 7-phosphate: step 1/4. Its pathway is nucleotide-sugar biosynthesis; ADP-L-glycero-beta-D-manno-heptose biosynthesis; ADP-L-glycero-beta-D-manno-heptose from D-glycero-beta-D-manno-heptose 7-phosphate: step 3/4. Catalyzes the phosphorylation of D-glycero-D-manno-heptose 7-phosphate at the C-1 position to selectively form D-glycero-beta-D-manno-heptose-1,7-bisphosphate. Its function is as follows. Catalyzes the ADP transfer from ATP to D-glycero-beta-D-manno-heptose 1-phosphate, yielding ADP-D-glycero-beta-D-manno-heptose. The chain is Bifunctional protein HldE from Pseudomonas paraeruginosa (strain DSM 24068 / PA7) (Pseudomonas aeruginosa (strain PA7)).